A 438-amino-acid polypeptide reads, in one-letter code: 23S rRNA (uracil(1939)-C(5))-methyltransferase RlmD (438 aa).

The TRAM domain maps to 10 to 68 (RVTTRQTITVKVHDLDSFGQGVAHHNGKALFVQGALPDEVAEVSIIEDKRHFSRGVATR). 4 residues coordinate [4Fe-4S] cluster: Cys81, Cys87, Cys90, and Cys168. Residues Gln271, Phe300, Asn305, Glu321, Asn348, and Asp369 each contribute to the S-adenosyl-L-methionine site. The active-site Nucleophile is Cys395.

This sequence belongs to the class I-like SAM-binding methyltransferase superfamily. RNA M5U methyltransferase family. RlmD subfamily.

The enzyme catalyses uridine(1939) in 23S rRNA + S-adenosyl-L-methionine = 5-methyluridine(1939) in 23S rRNA + S-adenosyl-L-homocysteine + H(+). Its function is as follows. Catalyzes the formation of 5-methyl-uridine at position 1939 (m5U1939) in 23S rRNA. The protein is 23S rRNA (uracil(1939)-C(5))-methyltransferase RlmD of Erwinia tasmaniensis (strain DSM 17950 / CFBP 7177 / CIP 109463 / NCPPB 4357 / Et1/99).